The following is a 398-amino-acid chain: Phosphoglycerate kinase (398 aa).

Substrate contacts are provided by residues 21-23, Arg36, 59-62, Arg117, and Arg150; these read DFN and HFGR. ATP contacts are provided by residues Lys200, Glu321, and 351–354; that span reads GGDS.

This sequence belongs to the phosphoglycerate kinase family. In terms of assembly, monomer.

It is found in the cytoplasm. It carries out the reaction (2R)-3-phosphoglycerate + ATP = (2R)-3-phospho-glyceroyl phosphate + ADP. It participates in carbohydrate degradation; glycolysis; pyruvate from D-glyceraldehyde 3-phosphate: step 2/5. The polypeptide is Phosphoglycerate kinase (Wolbachia pipientis wMel).